The following is a 184-amino-acid chain: Alpha-tubulin N-acetyltransferase (184 aa).

Residues Met1–Phe170 enclose the N-acetyltransferase domain. Residues Phe104–Ile117 and Ser140–Lys149 each bind acetyl-CoA.

The protein belongs to the acetyltransferase ATAT1 family.

The enzyme catalyses L-lysyl-[alpha-tubulin] + acetyl-CoA = N(6)-acetyl-L-lysyl-[alpha-tubulin] + CoA + H(+). Specifically acetylates 'Lys-40' in alpha-tubulin on the lumenal side of microtubules. Promotes microtubule destabilization and accelerates microtubule dynamics; this activity may be independent of acetylation activity. Acetylates alpha-tubulin with a slow enzymatic rate, due to a catalytic site that is not optimized for acetyl transfer. Enters the microtubule through each end and diffuses quickly throughout the lumen of microtubules. Acetylates only long/old microtubules because of its slow acetylation rate since it does not have time to act on dynamically unstable microtubules before the enzyme is released. This is Alpha-tubulin N-acetyltransferase from Plasmodium falciparum (isolate 3D7).